The sequence spans 307 residues: Porphobilinogen deaminase (307 aa).

An S-(dipyrrolylmethanemethyl)cysteine modification is found at Cys241.

Belongs to the HMBS family. In terms of assembly, monomer. Dipyrromethane is required as a cofactor.

The enzyme catalyses 4 porphobilinogen + H2O = hydroxymethylbilane + 4 NH4(+). It participates in porphyrin-containing compound metabolism; protoporphyrin-IX biosynthesis; coproporphyrinogen-III from 5-aminolevulinate: step 2/4. Tetrapolymerization of the monopyrrole PBG into the hydroxymethylbilane pre-uroporphyrinogen in several discrete steps. This chain is Porphobilinogen deaminase, found in Coxiella burnetii (strain RSA 331 / Henzerling II).